Reading from the N-terminus, the 164-residue chain is Coenzyme Q-binding protein coq10, mitochondrial (164 aa).

This sequence belongs to the COQ10 family. In terms of assembly, interacts with coenzyme Q.

The protein localises to the mitochondrion inner membrane. Required for the function of coenzyme Q in the respiratory chain. May serve as a chaperone or may be involved in the transport of Q6 from its site of synthesis to the catalytic sites of the respiratory complexes. The polypeptide is Coenzyme Q-binding protein coq10, mitochondrial (Schizosaccharomyces pombe (strain 972 / ATCC 24843) (Fission yeast)).